The primary structure comprises 1113 residues: Potassium channel subfamily U member 1 (1113 aa).

At 1–24 (MSQTLLDNLNKKELTETSCTIEIQ) the chain is on the extracellular side. The chain crosses the membrane as a helical span at residues 25–45 (AAFILSSLATFFGGLIVLFIF). Residues 46 to 101 (RIALKISRNWKTVKGPRGILELFSSRRIEVNPLRKLYFHGVFRERIEMLLSAQTIV) lie on the Cytoplasmic side of the membrane. Residues 102 to 122 (GQVLVILVFVLSIGSLVIYFI) form a helical membrane-spanning segment. Topologically, residues 123–137 (NSMDPVRKCSSYEDK) are extracellular. The helical transmembrane segment at 138-158 (IVHVDLSFNAFFSFYFGLRFW) threads the bilayer. Residues 159 to 165 (AAEDKIK) are Cytoplasmic-facing. The chain crosses the membrane as a helical span at residues 166 to 186 (FWLEMNSIVDIFTIPPTFISY). At 187 to 188 (YL) the chain is on the extracellular side. Residues 189-209 (KSNWLGLRFLRALRLLELPKI) traverse the membrane as a helical; Voltage-sensor segment. The Cytoplasmic portion of the chain corresponds to 210-226 (LQILQVIKTSNSVKLSK). The helical transmembrane segment at 227–247 (LMSIVISTWFTAAGFLHLVEN) threads the bilayer. Residues 248–259 (SGDPWLNGRNSQ) lie on the Extracellular side of the membrane. An intramembrane region (pore-forming) is located at residues 260–282 (TMSYFESIYLVTATMSTVGFGDV). Topologically, residues 283–290 (VAKTSLGR) are extracellular. Residues 291–311 (IFIVFFTLGSLILFANYIPEM) form a helical membrane-spanning segment. Topologically, residues 312-1113 (VELFSTRKKY…FDASDIDPGK (802 aa)) are cytoplasmic. RCK N-terminal domains lie at 331 to 473 (KKFI…DNII) and 710 to 881 (QNHI…DEAI). Residues 1047-1081 (ASIQDQDTTTNVTSMSQGSNFQGAQSALNEHSLSP) are compositionally biased toward polar residues. Residues 1047–1091 (ASIQDQDTTTNVTSMSQGSNFQGAQSALNEHSLSPASAMGEKKSP) are disordered.

Belongs to the potassium channel family. Calcium-activated (TC 1.A.1.3) subfamily. KCa1.1/KCNMA1 sub-subfamily. As to quaternary structure, homotetramer; which constitutes the activated potassium channel. Interacts with LRRC52; this interaction changes channel gating properties, such as shifting gating to more negative potentials at a given pH.

The protein resides in the cell membrane. It localises to the cell projection. Its subcellular location is the cilium. It is found in the flagellum membrane. It catalyses the reaction K(+)(in) = K(+)(out). With respect to regulation, regulated by changes in cytosolic pH; activated by alkalization. Not activated by intracellular Ca(2+). VU0546110 acts as a selective inhibitor. The auxiliary subunit LRRC52 shifts the activation of KCNU1 to more negative potentials at a given pH. Functionally, testis-specific potassium channel activated by both intracellular pH and membrane voltage that mediates export of K(+). Represents the primary spermatozoan K(+) current. The channel underlies a pH-triggered membrane hyperpolarization during the process of sperm capacitation, as sperm encounter the alkaline environment near the ovum in the female reproductive tract, thereby playing an essential for male fertility. In Rattus norvegicus (Rat), this protein is Potassium channel subfamily U member 1 (Kcnu1).